Consider the following 243-residue polypeptide: Epoxyqueuosine reductase QueH (243 aa).

Residues 1 to 16 (MHRTKLEQKQPHFDAQ) are compositionally biased toward basic and acidic residues. The interval 1 to 30 (MHRTKLEQKQPHFDAQKRRKKECKNSNTPF) is disordered. [4Fe-4S] cluster contacts are provided by Cys-49, Cys-50, Cys-128, and Cys-131. Cys-211 and Cys-213 are joined by a disulfide.

It belongs to the QueH family.

The enzyme catalyses epoxyqueuosine(34) in tRNA + AH2 = queuosine(34) in tRNA + A + H2O. The protein operates within tRNA modification; tRNA-queuosine biosynthesis. In terms of biological role, catalyzes the conversion of epoxyqueuosine (oQ) to queuosine (Q), which is a hypermodified base found in the wobble positions of tRNA(Asp), tRNA(Asn), tRNA(His) and tRNA(Tyr). This Histophilus somni (strain 129Pt) (Haemophilus somnus) protein is Epoxyqueuosine reductase QueH.